The primary structure comprises 530 residues: Methionine--tRNA ligase (530 aa).

The 'HIGH' region signature appears at 18 to 28; the sequence is YYVNDVPHIGS. Residues cysteine 133, cysteine 136, cysteine 151, and histidine 154 each contribute to the Zn(2+) site. Positions 307 to 311 match the 'KMSKS' region motif; sequence KMGKS. Lysine 310 provides a ligand contact to ATP.

This sequence belongs to the class-I aminoacyl-tRNA synthetase family. MetG type 2A subfamily. In terms of assembly, monomer. It depends on Zn(2+) as a cofactor.

The protein localises to the cytoplasm. The enzyme catalyses tRNA(Met) + L-methionine + ATP = L-methionyl-tRNA(Met) + AMP + diphosphate. Functionally, is required not only for elongation of protein synthesis but also for the initiation of all mRNA translation through initiator tRNA(fMet) aminoacylation. The protein is Methionine--tRNA ligase of Nostoc sp. (strain PCC 7120 / SAG 25.82 / UTEX 2576).